The primary structure comprises 190 residues: MFGMIKNSLLGGVENNEGKLVSKGEKDGVAFEEREYEGGKFISTEVSGKPFDEASKEGVLRLLKYVGGSNNKSAGMGMTSPVIINSYPSENDTLQPNVKVLLRIPSQYQADPPVPTDNTIQIEDRESVTLYSTQFGGYAKEADYVSHAAKLRSCLGPDISYHSDYYMCCGYDPPMKPYGRRNEVWFIKNN.

This sequence belongs to the HEBP family. In terms of assembly, monomer.

Its subcellular location is the cytoplasm. May bind free porphyrinogens that may be present in the cell and thus facilitate removal of these potentially toxic compound. Binds with a high affinity to one molecule of heme or porphyrins. It binds metalloporphyrins, free porphyrins and N-methylprotoporphyrin with similar affinities. This Xenopus laevis (African clawed frog) protein is Heme-binding protein 1 (hebp1).